A 340-amino-acid chain; its full sequence is tRNA N6-adenosine threonylcarbamoyltransferase (340 aa).

Positions 111 and 115 each coordinate Fe cation. Substrate-binding positions include Leu134–Gly138, Asp167, Gly180, and Asn272. Asp300 is a Fe cation binding site.

This sequence belongs to the KAE1 / TsaD family. Fe(2+) serves as cofactor.

It localises to the cytoplasm. It catalyses the reaction L-threonylcarbamoyladenylate + adenosine(37) in tRNA = N(6)-L-threonylcarbamoyladenosine(37) in tRNA + AMP + H(+). Functionally, required for the formation of a threonylcarbamoyl group on adenosine at position 37 (t(6)A37) in tRNAs that read codons beginning with adenine. Is involved in the transfer of the threonylcarbamoyl moiety of threonylcarbamoyl-AMP (TC-AMP) to the N6 group of A37, together with TsaE and TsaB. TsaD likely plays a direct catalytic role in this reaction. The protein is tRNA N6-adenosine threonylcarbamoyltransferase of Proteus mirabilis (strain HI4320).